The primary structure comprises 170 residues: Two-component response regulator ORR6 (170 aa).

The Response regulatory domain occupies 51–170 (HVLAVDDSSV…DVSRLCSRIR (120 aa)). At Asp-103 the chain carries 4-aspartylphosphate.

Belongs to the ARR family. Type-A subfamily. Post-translationally, two-component system major event consists of a His-to-Asp phosphorelay between a sensor histidine kinase (HK) and a response regulator (RR). In plants, the His-to-Asp phosphorelay involves an additional intermediate named Histidine-containing phosphotransfer protein (HPt). This multistep phosphorelay consists of a His-Asp-His-Asp sequential transfer of a phosphate group between first a His and an Asp of the HK protein, followed by the transfer to a conserved His of the HPt protein and finally the transfer to an Asp in the receiver domain of the RR protein. As to expression, expressed in roots, leaf blades, leaf sheaths, shoot apex, flowers and panicles.

Its function is as follows. Functions as a response regulator involved in His-to-Asp phosphorelay signal transduction system. Phosphorylation of the Asp residue in the receiver domain activates the ability of the protein to promote the transcription of target genes. Type-A response regulators seem to act as negative regulators of the cytokinin signaling. This chain is Two-component response regulator ORR6, found in Oryza sativa subsp. japonica (Rice).